A 363-amino-acid polypeptide reads, in one-letter code: Probable tRNA pseudouridine synthase D (363 aa).

Aspartate 82 functions as the Nucleophile in the catalytic mechanism. The region spanning 151–363 is the TRUD domain; sequence YLPAYIGYQR…IARTDPRLFT (213 aa).

The protein belongs to the pseudouridine synthase TruD family.

It catalyses the reaction uridine(13) in tRNA = pseudouridine(13) in tRNA. In terms of biological role, could be responsible for synthesis of pseudouridine from uracil-13 in transfer RNAs. In Sulfurisphaera tokodaii (strain DSM 16993 / JCM 10545 / NBRC 100140 / 7) (Sulfolobus tokodaii), this protein is Probable tRNA pseudouridine synthase D.